The chain runs to 131 residues: Histone H2B.2 (131 aa).

Over residues 1 to 19 the composition is skewed to basic and acidic residues; that stretch reads MSAKAEKKPASKAPAEKKP. The segment at 1–38 is disordered; sequence MSAKAEKKPASKAPAEKKPAAKKTAPSSDGKKRTKARK. K7 and K8 each carry N6-acetyllysine; alternate. Residues K7 and K8 each participate in a glycyl lysine isopeptide (Lys-Gly) (interchain with G-Cter in SUMO); alternate cross-link. S11 is subject to Phosphoserine. At K12 the chain carries N6-acetyllysine. K17 carries the N6-acetyllysine; alternate modification. Residue K17 forms a Glycyl lysine isopeptide (Lys-Gly) (interchain with G-Cter in SUMO); alternate linkage. A Glycyl lysine isopeptide (Lys-Gly) (interchain with G-Cter in SUMO) cross-link involves residue K18. K124 is covalently cross-linked (Glycyl lysine isopeptide (Lys-Gly) (interchain with G-Cter in ubiquitin)).

This sequence belongs to the histone H2B family. The nucleosome is a histone octamer containing two molecules each of H2A, H2B, H3 and H4 assembled in one H3-H4 heterotetramer and two H2A-H2B heterodimers. The octamer wraps approximately 147 bp of DNA. In terms of processing, monoubiquitinated by the UBC2-BRE1 complex to form H2BK123ub1. H2BK123ub1 gives a specific tag for epigenetic transcriptional activation and is also prerequisite for H3K4me and H3K79me formation. H2BK123ub1 also modulates the formation of double-strand breaks during meiosis and is a prerequisite for DNA-damage checkpoint activation. Phosphorylated by STE20 to form H2BS10ph during progression through meiotic prophase. May be correlated with chromosome condensation. Post-translationally, acetylated by GCN5 to form H2BK11ac and H2BK16ac. H2BK16ac can also be formed by ESA1. Acetylation of N-terminal lysines and particularly formation of H2BK11acK16ac has a positive effect on transcription. In terms of processing, sumoylation to form H2BK6su or H2BK7su, and probably also H2BK16su or H2BK17su, occurs preferentially near the telomeres and represses gene transcription.

The protein resides in the nucleus. The protein localises to the chromosome. Core component of nucleosome. Nucleosomes wrap and compact DNA into chromatin, limiting DNA accessibility to the cellular machineries which require DNA as a template. Histones thereby play a central role in transcription regulation, DNA repair, DNA replication and chromosomal stability. DNA accessibility is regulated via a complex set of post-translational modifications of histones, also called histone code, and nucleosome remodeling. The sequence is that of Histone H2B.2 (HTB2) from Candida glabrata (strain ATCC 2001 / BCRC 20586 / JCM 3761 / NBRC 0622 / NRRL Y-65 / CBS 138) (Yeast).